Here is a 135-residue protein sequence, read N- to C-terminus: Large ribosomal subunit protein uL22c (135 aa).

Belongs to the universal ribosomal protein uL22 family. As to quaternary structure, part of the 50S ribosomal subunit.

It is found in the plastid. In terms of biological role, this protein binds specifically to 23S rRNA. The globular domain of the protein is located near the polypeptide exit tunnel on the outside of the subunit, while an extended beta-hairpin is found that lines the wall of the exit tunnel in the center of the 70S ribosome. In Cuscuta exaltata (Tall dodder), this protein is Large ribosomal subunit protein uL22c (rpl22).